The following is a 377-amino-acid chain: Histone deacetylase 8 (377 aa).

Residues leucine 14–glycine 324 are histone deacetylase. A Phosphoserine modification is found at serine 39. Residue aspartate 101 participates in substrate binding. Histidine 143 serves as the catalytic Proton acceptor. Glycine 151 serves as a coordination point for substrate. The a divalent metal cation site is built by aspartate 178, histidine 180, and aspartate 267. Tyrosine 306 contacts substrate.

Belongs to the histone deacetylase family. HD type 1 subfamily. In terms of assembly, interacts with CBFA2T3. Interacts with phosphorylated SMG5/EST1B; this interaction protects SMG5 from ubiquitin-mediated degradation. Associates with alpha-SMA (smooth muscle alpha-actin). The cofactor is a divalent metal cation. Phosphorylated by PKA on serine 39. Phosphorylation reduces deacetylase activity observed preferentially on histones H3 and H4.

Its subcellular location is the nucleus. It localises to the chromosome. The protein localises to the cytoplasm. The catalysed reaction is N(6)-acetyl-L-lysyl-[histone] + H2O = L-lysyl-[histone] + acetate. The enzyme catalyses N(6)-acetyl-L-lysyl-[protein] + H2O = L-lysyl-[protein] + acetate. It catalyses the reaction N(6)-(2E)-butenoyl-L-lysyl-[protein] + H2O = (2E)-2-butenoate + L-lysyl-[protein]. With respect to regulation, its activity is inhibited by trichostatin A (TSA) and butyrate, 2 well known histone deacetylase inhibitors. In terms of biological role, histone deacetylase that catalyzes the deacetylation of lysine residues on the N-terminal part of the core histones (H2A, H2B, H3 and H4). Histone deacetylation gives a tag for epigenetic repression and plays an important role in transcriptional regulation, cell cycle progression and developmental events. Histone deacetylases act via the formation of large multiprotein complexes. Also involved in the deacetylation of cohesin complex protein SMC3 regulating release of cohesin complexes from chromatin. May play a role in smooth muscle cell contractility. In addition to protein deacetylase activity, also has protein-lysine deacylase activity: acts as a protein decrotonylase by mediating decrotonylation ((2E)-butenoyl) of histones. This chain is Histone deacetylase 8 (HDAC8), found in Bos taurus (Bovine).